The primary structure comprises 123 residues: Large ribosomal subunit protein uL14 (123 aa).

This sequence belongs to the universal ribosomal protein uL14 family. In terms of assembly, part of the 50S ribosomal subunit. Forms a cluster with proteins L3 and L19. In the 70S ribosome, L14 and L19 interact and together make contacts with the 16S rRNA in bridges B5 and B8.

Binds to 23S rRNA. Forms part of two intersubunit bridges in the 70S ribosome. The protein is Large ribosomal subunit protein uL14 of Hamiltonella defensa subsp. Acyrthosiphon pisum (strain 5AT).